Here is a 212-residue protein sequence, read N- to C-terminus: tRNA (guanine-N(7)-)-methyltransferase (212 aa).

E44, D69, D96, and D118 together coordinate S-adenosyl-L-methionine. D118 is a catalytic residue. K122 provides a ligand contact to substrate. Residues 124-129 (RHEKRR) are interaction with RNA. Residues D154 and 191–194 (TEYE) each bind substrate.

Belongs to the class I-like SAM-binding methyltransferase superfamily. TrmB family.

It carries out the reaction guanosine(46) in tRNA + S-adenosyl-L-methionine = N(7)-methylguanosine(46) in tRNA + S-adenosyl-L-homocysteine. Its pathway is tRNA modification; N(7)-methylguanine-tRNA biosynthesis. Functionally, catalyzes the formation of N(7)-methylguanine at position 46 (m7G46) in tRNA. The sequence is that of tRNA (guanine-N(7)-)-methyltransferase from Streptococcus gordonii (strain Challis / ATCC 35105 / BCRC 15272 / CH1 / DL1 / V288).